The following is a 352-amino-acid chain: Sortase SrtE1 (352 aa).

Basic and acidic residues-rich tracts occupy residues 1 to 10 (MTALRPERDS) and 34 to 45 (RYEESAAGEENR). The tract at residues 1 to 132 (MTALRPERDS…RQARARKPGA (132 aa)) is disordered. The Cytoplasmic portion of the chain corresponds to 1–139 (MTALRPERDS…PGAAVVASRA (139 aa)). Residues 15–79 (DQGSSYGQPY…TGPIGGGPDG (65 aa)) are required for protein stability. Residues 71–82 (GPIGGGPDGGGR) show a composition bias toward gly residues. Basic residues predominate over residues 83 to 97 (AARRKAAKRRHGRRG). The chain crosses the membrane as a helical span at residues 140 to 160 (IGEIFITTGVLMLLFVTYQLW). Residues 161–352 (WTNVRAHAQA…SKGKPDALVS (192 aa)) are Extracellular-facing. Catalysis depends on residues His251 and Cys320. The active-site Proton donor is the Arg329.

This sequence belongs to the bacterial sortase family. Class E subfamily.

It is found in the cell membrane. It carries out the reaction The enzyme catalyzes a cell wall sorting reaction in which a surface protein with a sorting signal containing a LPXTG motif is cleaved between the Thr and Gly residue. The resulting threonine carboxyl end of the protein is covalently attached to a pentaglycine cross-bridge of peptidoglycan.. Its function is as follows. Transpeptidase that anchors surface proteins to the cell wall. Recognizes both Leu-Ala-x-Thr-Gly and Leu-Pro-x-Thr-Gly, with a preference for the former. Unlike the S.aureus sortase it cleaves not only the Thr-Gly motif but also the Ala-X bond; Ala-Glu and Ala-His bonds are better substrates than the Thr-Gly motif in vitro. Among its possible substrates are the chaplins ChpA, ChpB and ChpC; this enzyme is less important for ChpC attachment than is SrtE2. A double knockout mutant of srtE1 and srtE2 shows a developmental defect in aerial hyphae formation more dramatic than that due to chaplin deletion. The protein is Sortase SrtE1 of Streptomyces coelicolor (strain ATCC BAA-471 / A3(2) / M145).